Consider the following 271-residue polypeptide: Cobalt import ATP-binding protein CbiO (271 aa).

Positions 2–236 (LATSDLWFRY…TEAMEHAGLT (235 aa)) constitute an ABC transporter domain. 34–41 (GANGCGKS) provides a ligand contact to ATP.

Belongs to the ABC transporter superfamily. Cobalt importer (TC 3.A.1.18.1) family. As to quaternary structure, forms an energy-coupling factor (ECF) transporter complex composed of an ATP-binding protein (A component, CbiO), a transmembrane protein (T component, CbiQ) and 2 possible substrate-capture proteins (S components, CbiM and CbiN) of unknown stoichimetry.

The protein resides in the cell inner membrane. It functions in the pathway cofactor biosynthesis; adenosylcobalamin biosynthesis. In terms of biological role, part of the energy-coupling factor (ECF) transporter complex CbiMNOQ involved in cobalt import. Presumably responsible for energy coupling to the transport system. The sequence is that of Cobalt import ATP-binding protein CbiO from Salmonella typhi.